Consider the following 122-residue polypeptide: Small ribosomal subunit protein uS12c (122 aa).

Belongs to the universal ribosomal protein uS12 family. In terms of assembly, part of the 30S ribosomal subunit.

The protein localises to the plastid. It is found in the chloroplast. With S4 and S5 plays an important role in translational accuracy. Located at the interface of the 30S and 50S subunits. The chain is Small ribosomal subunit protein uS12c (rps12) from Chloranthus spicatus (Chulantree).